We begin with the raw amino-acid sequence, 195 residues long: MKLIIGIGGVTNGGKTTLTNSLLKALPNCCVIHQDDFFKPQDQIAVGEDGFKQWDVLESLDMETMLSTVQAWVKDPHKFARAHGVSLQSGASDTHVLLLEGFLLYSYRPLVDLYSQRYFLTVPYEECKRRRRSRTYMVPDPPGLFDGHVWPMYQKYRREMEQDGVEVVYLDGMKSPEGLFHQVLEDIQNRLLNTS.

ATP is bound at residue G9–T17. Mg(2+) contacts are provided by T16 and D35. The active-site Proton acceptor is the D35. Residues D35–F38 and W54–D55 contribute to the substrate site. R130 lines the ATP pocket. Substrate is bound by residues R131 and Y136–M137. Residues R134–Y136 and K174–P176 contribute to the ATP site.

It belongs to the uridine kinase family. NRK subfamily. Monomer. Interacts with ITGB1 alone or when associated with alpha-7, but not with alpha-5. Expressed in skeletal muscle (at protein level).

It carries out the reaction beta-nicotinamide D-riboside + ATP = beta-nicotinamide D-ribonucleotide + ADP + H(+). It catalyses the reaction beta-D-ribosylnicotinate + ATP = nicotinate beta-D-ribonucleotide + ADP + H(+). Its pathway is cofactor biosynthesis; NAD(+) biosynthesis. In terms of biological role, catalyzes the phosphorylation of nicotinamide riboside (NR) and nicotinic acid riboside (NaR) to form nicotinamide mononucleotide (NMN) and nicotinic acid mononucleotide (NaMN). Reduces laminin matrix deposition and cell adhesion to laminin, but not to fibronectin. Involved in the regulation of PXN at the protein level and of PXN tyrosine phosphorylation. May play a role in the regulation of terminal myogenesis. This is Nicotinamide riboside kinase 2 (Nmrk2) from Mus musculus (Mouse).